We begin with the raw amino-acid sequence, 257 residues long: Protein YIPF5 (257 aa).

Topologically, residues 1 to 124 (MSGFDNFNTD…KASDGSIMNE (124 aa)) are cytoplasmic. Residues 125-145 (TDLAGPMVFCLAFGATLLLTG) form a helical membrane-spanning segment. Position 146 (lysine 146) is a topological domain, lumenal. Residues 147 to 167 (IQFGYVYGISAIGCLGMYCLL) traverse the membrane as a helical segment. Residues 168–173 (NLMSMT) are Cytoplasmic-facing. The helical transmembrane segment at 174-194 (GVSFGCVASVLGYCLLPMIIL) threads the bilayer. Residues 195–196 (SS) lie on the Lumenal side of the membrane. The helical transmembrane segment at 197 to 217 (FGVIFSLQGIMGIILTAAIIG) threads the bilayer. At 218–236 (WCSLSASKIFISALAMDGQ) the chain is on the cytoplasmic side. The helical transmembrane segment at 237–257 (QLLVAYPCALLYGVFALISVF) threads the bilayer.

Belongs to the YIP1 family.

It localises to the endoplasmic reticulum membrane. Its subcellular location is the golgi apparatus. The protein resides in the cis-Golgi network membrane. Plays a role in transport between endoplasmic reticulum and Golgi. In Danio rerio (Zebrafish), this protein is Protein YIPF5 (yipf5).